The chain runs to 131 residues: Peptide methionine sulfoxide reductase MsrB (131 aa).

One can recognise a MsrB domain in the interval 8–130 (LDEWRSMLDP…NSVCIDLRPR (123 aa)). The Zn(2+) site is built by C47, C50, C96, and C99. The active-site Nucleophile is the C119.

It belongs to the MsrB Met sulfoxide reductase family. The cofactor is Zn(2+).

The enzyme catalyses L-methionyl-[protein] + [thioredoxin]-disulfide + H2O = L-methionyl-(R)-S-oxide-[protein] + [thioredoxin]-dithiol. This is Peptide methionine sulfoxide reductase MsrB from Pseudomonas putida (strain ATCC 47054 / DSM 6125 / CFBP 8728 / NCIMB 11950 / KT2440).